We begin with the raw amino-acid sequence, 282 residues long: MPELPEVEVVRRGLQDYIVGKTITAVRVHHPRAVRRHVAGPTDLTNRLLGTRINGIDRRGKYLWFLLDTDIALVVHLGMSGQMLLGTVPRVDHVRISALFDDGTVLNFTDQRTLGGWLLADLMTVDGSVLPVPVAHLARDPFDPRFDVEAVVKVLRCKHSELKRQLLDQQTVSGIGNIYADEALWRAEVHGARIAATLTRRQLAAVLDAAADVMRDSLAKGGTSFDSLYVNVNGESGYFDRSLDAYGREGEGCRRCGAVMHREKFMNRSSFYCPRCQPRPRR.

Proline 2 functions as the Schiff-base intermediate with DNA in the catalytic mechanism. The Proton donor role is filled by glutamate 3. Catalysis depends on lysine 61, which acts as the Proton donor; for beta-elimination activity. The DNA site is built by histidine 93, arginine 112, and lysine 158. Residues 244 to 278 (DAYGREGEGCRRCGAVMHREKFMNRSSFYCPRCQP) form an FPG-type zinc finger. Arginine 268 functions as the Proton donor; for delta-elimination activity in the catalytic mechanism.

It belongs to the FPG family. In terms of assembly, monomer. Zn(2+) is required as a cofactor.

It catalyses the reaction Hydrolysis of DNA containing ring-opened 7-methylguanine residues, releasing 2,6-diamino-4-hydroxy-5-(N-methyl)formamidopyrimidine.. The enzyme catalyses 2'-deoxyribonucleotide-(2'-deoxyribose 5'-phosphate)-2'-deoxyribonucleotide-DNA = a 3'-end 2'-deoxyribonucleotide-(2,3-dehydro-2,3-deoxyribose 5'-phosphate)-DNA + a 5'-end 5'-phospho-2'-deoxyribonucleoside-DNA + H(+). Involved in base excision repair of DNA damaged by oxidation or by mutagenic agents. Acts as a DNA glycosylase that recognizes and removes damaged bases. Has a preference for oxidized purines, such as 7,8-dihydro-8-oxoguanine (8-oxoG). Has AP (apurinic/apyrimidinic) lyase activity and introduces nicks in the DNA strand. Cleaves the DNA backbone by beta-delta elimination to generate a single-strand break at the site of the removed base with both 3'- and 5'-phosphates. This is Formamidopyrimidine-DNA glycosylase from Mycobacterium leprae (strain Br4923).